The sequence spans 587 residues: Phosphomethylpyrimidine synthase (587 aa).

Residues 1-58 are disordered; sequence MTPTQNEIHPKHSYSPIRKDGLEVPETEIRLDDSPSGPNEPFRIYRTRGPETNPKQGL. Basic and acidic residues predominate over residues 17–33; sequence IRKDGLEVPETEIRLDD. Substrate-binding positions include N180, M209, Y238, H274, 294–296, 335–338, and E374; these read SRG and DGLR. H378 lines the Zn(2+) pocket. A substrate-binding site is contributed by Y401. H442 is a binding site for Zn(2+). Positions 522, 525, and 530 each coordinate [4Fe-4S] cluster.

It belongs to the ThiC family. The cofactor is [4Fe-4S] cluster.

The enzyme catalyses 5-amino-1-(5-phospho-beta-D-ribosyl)imidazole + S-adenosyl-L-methionine = 4-amino-2-methyl-5-(phosphooxymethyl)pyrimidine + CO + 5'-deoxyadenosine + formate + L-methionine + 3 H(+). Its pathway is cofactor biosynthesis; thiamine diphosphate biosynthesis. Catalyzes the synthesis of the hydroxymethylpyrimidine phosphate (HMP-P) moiety of thiamine from aminoimidazole ribotide (AIR) in a radical S-adenosyl-L-methionine (SAM)-dependent reaction. In Corynebacterium glutamicum (strain ATCC 13032 / DSM 20300 / JCM 1318 / BCRC 11384 / CCUG 27702 / LMG 3730 / NBRC 12168 / NCIMB 10025 / NRRL B-2784 / 534), this protein is Phosphomethylpyrimidine synthase.